The sequence spans 603 residues: Probable potassium transport system protein Kup (603 aa).

12 helical membrane passes run 15-35, 43-63, 94-114, 136-156, 163-183, 201-221, 244-264, 284-304, 336-356, 367-387, 391-411, and 415-435; these read GLVFGDIGTSPIYTLTVIFLL, VIGVLSLIIWTLITLVTVEYA, AAFITLLAYIGVSFLVGDGVI, IGQGAIMFIAGIIAVALFSVQ, ITWVFGPVMVLWFASLAFSGI, AISFLLHNGFTGFFVLSEVIL, AWRLVFSALVLNYLGQGAFII, IYIPFLILSITATIIASQAMI, IYIGAVNWLLLISVLFMIFEF, GLAVTGTMSITGLMMTLIFYL, MFRSFVSLFVTVIDVVFLLSN, and IPHGGYWSIVIAAIAFSLIII.

Belongs to the HAK/KUP transporter (TC 2.A.72) family.

The protein localises to the cell membrane. The enzyme catalyses K(+)(in) + H(+)(in) = K(+)(out) + H(+)(out). Its function is as follows. Transport of potassium into the cell. Likely operates as a K(+):H(+) symporter. This is Probable potassium transport system protein Kup from Methanosarcina acetivorans (strain ATCC 35395 / DSM 2834 / JCM 12185 / C2A).